The chain runs to 400 residues: Argininosuccinate synthase (400 aa).

9 to 17 (AYSGGLDTS) lines the ATP pocket. Tyrosine 87 provides a ligand contact to L-citrulline. Glycine 117 serves as a coordination point for ATP. Residues threonine 119, asparagine 123, and aspartate 124 each contribute to the L-aspartate site. Asparagine 123 contributes to the L-citrulline binding site. L-citrulline contacts are provided by arginine 127, serine 176, serine 185, glutamate 261, and tyrosine 273.

This sequence belongs to the argininosuccinate synthase family. Type 1 subfamily. As to quaternary structure, homotetramer.

Its subcellular location is the cytoplasm. It carries out the reaction L-citrulline + L-aspartate + ATP = 2-(N(omega)-L-arginino)succinate + AMP + diphosphate + H(+). It functions in the pathway amino-acid biosynthesis; L-arginine biosynthesis; L-arginine from L-ornithine and carbamoyl phosphate: step 2/3. This chain is Argininosuccinate synthase, found in Chlorobium limicola (strain DSM 245 / NBRC 103803 / 6330).